A 275-amino-acid polypeptide reads, in one-letter code: WIMGHMVNEIYQIDEFVDLGANSIETDITFDDDAMAEYSYHGVPCDCMRWCHKWEYVNDFLEGLRRATTPGDSKYRKQLILVVFDLKTGDLSSSTAYKGGKLFAEKLLRYYWNGGSNGGRAYIIISIPDIDHYAFISGFRDALKKSGHEDLLAKVGYDFSGNDDLNSIRGALHKAGVKDREHVWQSDGITNCLLRSLDRVNEAVKNRDSSNGYISKMYYWTIEKYATVRDALNAEVDGIMTNYPDVIVNVLNEDSFKNRFRMATFDDNPWELFKR.

His5 is a catalytic residue. Glu25 and Asp27 together coordinate Mg(2+). His41 (nucleophile) is an active-site residue. Intrachain disulfides connect Cys45–Cys51 and Cys47–Cys192. A Mg(2+)-binding site is contributed by Asp85.

This sequence belongs to the arthropod phospholipase D family. Class II subfamily. Mg(2+) serves as cofactor. As to expression, expressed by the venom gland.

The protein localises to the secreted. The enzyme catalyses an N-(acyl)-sphingosylphosphocholine = an N-(acyl)-sphingosyl-1,3-cyclic phosphate + choline. It catalyses the reaction an N-(acyl)-sphingosylphosphoethanolamine = an N-(acyl)-sphingosyl-1,3-cyclic phosphate + ethanolamine. The catalysed reaction is a 1-acyl-sn-glycero-3-phosphocholine = a 1-acyl-sn-glycero-2,3-cyclic phosphate + choline. It carries out the reaction a 1-acyl-sn-glycero-3-phosphoethanolamine = a 1-acyl-sn-glycero-2,3-cyclic phosphate + ethanolamine. Dermonecrotic toxins cleave the phosphodiester linkage between the phosphate and headgroup of certain phospholipids (sphingolipid and lysolipid substrates), forming an alcohol (often choline) and a cyclic phosphate. This toxin acts on sphingomyelin (SM). It may also act on ceramide phosphoethanolamine (CPE), lysophosphatidylcholine (LPC) and lysophosphatidylethanolamine (LPE), but not on lysophosphatidylserine (LPS), and lysophosphatidylglycerol (LPG). It acts by transphosphatidylation, releasing exclusively cyclic phosphate products as second products. Induces dermonecrosis, hemolysis, increased vascular permeability, edema, inflammatory response, and platelet aggregation. The sequence is that of Dermonecrotic toxin LamSicTox-alphaIV1ii from Loxosceles amazonica (Recluse spider).